A 400-amino-acid chain; its full sequence is Double C2-like domain-containing protein alpha (400 aa).

Residues 1–89 (MRGRRGDRMT…DSYDSDDATA (89 aa)) are interaction with UNC13D and DYNLT1. 2 consecutive C2 domains span residues 89–211 (ALGT…HFNI) and 251–384 (ERGR…ERWH). Residues Asp120, Asp126, Asp181, Asp183, Asp282, Asp288, Asp342, Asp344, and Asp350 each contribute to the Ca(2+) site. Residues 215–400 (RQVPLASPSS…PPAAGALSSA (186 aa)) form an interaction with UNC13D region.

In terms of assembly, interacts (via N-terminus) with UNC13A. Interacts with cytoplasmic dynein light chain DYNLT1. Interacts with UNC13D. Ca(2+) is required as a cofactor. As to expression, predominantly expressed in brain. Also expressed in testis.

Its subcellular location is the lysosome. It is found in the cytoplasmic vesicle. The protein localises to the secretory vesicle. The protein resides in the synaptic vesicle membrane. It localises to the synapse. Its subcellular location is the synaptosome. In terms of biological role, calcium sensor which most probably regulates fusion of vesicles with membranes. Binds calcium and phospholipids. May be involved in calcium dependent neurotransmitter release through the interaction with UNC13A. May be involved in calcium-dependent spontaneous release of neurotransmitter in absence of action potentials in neuronal cells. Regulates Ca(2+)-dependent secretory lysosome exocytosis in mast cells. This chain is Double C2-like domain-containing protein alpha (DOC2A), found in Homo sapiens (Human).